Reading from the N-terminus, the 452-residue chain is Bifunctional F420 biosynthesis protein FbiB (452 aa).

The tract at residues 1–248 (MVSAPGDHAG…AGEEDLFWLG (248 aa)) is coenzyme F420:L-glutamate ligase. GTP is bound by residues 24–27 (LPEF), Ser-54, and Lys-59. Position 113 (Asp-113) interacts with a divalent metal cation. Asn-116 contacts GTP. A divalent metal cation is bound by residues Asp-154 and Thr-155. The segment at 249–452 (TAEAVERGRR…RDPGDGLVER (204 aa)) is dehydro-coenzyme F420-0 reductase. FMN-binding positions include 264 to 268 (RRSVR) and Ala-292. Asp-324 lines the coenzyme F420-(gamma-Glu)n pocket. 2 residues coordinate FMN: Gly-403 and Arg-440.

The protein in the N-terminal section; belongs to the CofE family. Mg(2+) serves as cofactor. Requires Mn(2+) as cofactor. K(+) is required as a cofactor.

The enzyme catalyses oxidized coenzyme F420-0 + GTP + L-glutamate = oxidized coenzyme F420-1 + GDP + phosphate + H(+). It carries out the reaction oxidized coenzyme F420-0 + FMN + H(+) = dehydro coenzyme F420-0 + FMNH2. It catalyses the reaction oxidized coenzyme F420-1 + GTP + L-glutamate = oxidized coenzyme F420-2 + GDP + phosphate + H(+). It functions in the pathway cofactor biosynthesis; coenzyme F420 biosynthesis. In terms of biological role, bifunctional enzyme that catalyzes the GTP-dependent successive addition of two or more gamma-linked L-glutamates to the L-lactyl phosphodiester of 7,8-didemethyl-8-hydroxy-5-deazariboflavin (F420-0) to form polyglutamated F420 derivatives, and the FMNH2-dependent reduction of dehydro-F420-0 to form F420-0. This chain is Bifunctional F420 biosynthesis protein FbiB, found in Nocardia farcinica (strain IFM 10152).